A 1578-amino-acid chain; its full sequence is Pentafunctional AROM polypeptide (1578 aa).

The tract at residues 1 to 393 (MSVELAKVSI…YGTSAHVVSD (393 aa)) is 3-dehydroquinate synthase. NAD(+) is bound by residues 44 to 46 (DTN), 79 to 82 (EAHK), 110 to 112 (GGV), and aspartate 115. Residue arginine 126 coordinates 7-phospho-2-dehydro-3-deoxy-D-arabino-heptonate. NAD(+) is bound at residue 135–136 (TS). Residues aspartate 142 and lysine 148 each coordinate 7-phospho-2-dehydro-3-deoxy-D-arabino-heptonate. Lysine 157 serves as a coordination point for NAD(+). Asparagine 158 is a binding site for 7-phospho-2-dehydro-3-deoxy-D-arabino-heptonate. NAD(+)-binding positions include 175–178 (WLET) and asparagine 186. Glutamate 190 contributes to the Zn(2+) binding site. Residues 190 to 193 (EVIK) and lysine 259 each bind 7-phospho-2-dehydro-3-deoxy-D-arabino-heptonate. The Proton acceptor; for 3-dehydroquinate synthase activity role is filled by glutamate 269. 7-phospho-2-dehydro-3-deoxy-D-arabino-heptonate contacts are provided by residues 273–277 (RNLLN) and histidine 280. Histidine 280 contributes to the Zn(2+) binding site. Histidine 284 functions as the Proton acceptor; for 3-dehydroquinate synthase activity in the catalytic mechanism. 2 residues coordinate 7-phospho-2-dehydro-3-deoxy-D-arabino-heptonate: histidine 296 and lysine 365. Histidine 296 lines the Zn(2+) pocket. Residues 406-863 (VHPFNNIPEG…WDVLHSQLGA (458 aa)) are EPSP synthase. Residue cysteine 845 is the For EPSP synthase activity of the active site. A shikimate kinase region spans residues 882–1071 (VVIIGMRAAG…VPSRRSAFVC (190 aa)). 886-893 (GMRAAGKS) contributes to the ATP binding site. The 3-dehydroquinase stretch occupies residues 1072-1284 (LTFEDLSDHL…AAPGQLTLAE (213 aa)). The active-site Proton acceptor; for 3-dehydroquinate dehydratase activity is the histidine 1189. Lysine 1218 functions as the Schiff-base intermediate with substrate; for 3-dehydroquinate dehydratase activity in the catalytic mechanism. The segment at 1297 to 1578 (AKKFFVIGSP…KAIFDAVTQE (282 aa)) is shikimate dehydrogenase.

In the N-terminal section; belongs to the sugar phosphate cyclases superfamily. Dehydroquinate synthase family. The protein in the 2nd section; belongs to the EPSP synthase family. This sequence in the 3rd section; belongs to the shikimate kinase family. It in the 4th section; belongs to the type-I 3-dehydroquinase family. In the C-terminal section; belongs to the shikimate dehydrogenase family. Homodimer. Zn(2+) is required as a cofactor.

The protein localises to the cytoplasm. The catalysed reaction is 7-phospho-2-dehydro-3-deoxy-D-arabino-heptonate = 3-dehydroquinate + phosphate. It catalyses the reaction 3-dehydroquinate = 3-dehydroshikimate + H2O. The enzyme catalyses shikimate + NADP(+) = 3-dehydroshikimate + NADPH + H(+). It carries out the reaction shikimate + ATP = 3-phosphoshikimate + ADP + H(+). The catalysed reaction is 3-phosphoshikimate + phosphoenolpyruvate = 5-O-(1-carboxyvinyl)-3-phosphoshikimate + phosphate. It participates in metabolic intermediate biosynthesis; chorismate biosynthesis; chorismate from D-erythrose 4-phosphate and phosphoenolpyruvate: step 2/7. It functions in the pathway metabolic intermediate biosynthesis; chorismate biosynthesis; chorismate from D-erythrose 4-phosphate and phosphoenolpyruvate: step 3/7. Its pathway is metabolic intermediate biosynthesis; chorismate biosynthesis; chorismate from D-erythrose 4-phosphate and phosphoenolpyruvate: step 4/7. The protein operates within metabolic intermediate biosynthesis; chorismate biosynthesis; chorismate from D-erythrose 4-phosphate and phosphoenolpyruvate: step 5/7. It participates in metabolic intermediate biosynthesis; chorismate biosynthesis; chorismate from D-erythrose 4-phosphate and phosphoenolpyruvate: step 6/7. Functionally, the AROM polypeptide catalyzes 5 consecutive enzymatic reactions in prechorismate polyaromatic amino acid biosynthesis. This Kluyveromyces lactis (strain ATCC 8585 / CBS 2359 / DSM 70799 / NBRC 1267 / NRRL Y-1140 / WM37) (Yeast) protein is Pentafunctional AROM polypeptide.